Here is a 244-residue protein sequence, read N- to C-terminus: UDP-2,3-diacylglucosamine hydrolase (244 aa).

Mn(2+)-binding residues include aspartate 8, histidine 10, aspartate 41, asparagine 79, and histidine 114. 79 to 80 (NR) is a binding site for substrate. Substrate is bound by residues aspartate 122, serine 160, asparagine 164, lysine 167, and histidine 195. Positions 195 and 197 each coordinate Mn(2+).

It belongs to the LpxH family. Requires Mn(2+) as cofactor.

The protein localises to the cell inner membrane. The catalysed reaction is UDP-2-N,3-O-bis[(3R)-3-hydroxytetradecanoyl]-alpha-D-glucosamine + H2O = 2-N,3-O-bis[(3R)-3-hydroxytetradecanoyl]-alpha-D-glucosaminyl 1-phosphate + UMP + 2 H(+). Its pathway is glycolipid biosynthesis; lipid IV(A) biosynthesis; lipid IV(A) from (3R)-3-hydroxytetradecanoyl-[acyl-carrier-protein] and UDP-N-acetyl-alpha-D-glucosamine: step 4/6. Functionally, hydrolyzes the pyrophosphate bond of UDP-2,3-diacylglucosamine to yield 2,3-diacylglucosamine 1-phosphate (lipid X) and UMP by catalyzing the attack of water at the alpha-P atom. Involved in the biosynthesis of lipid A, a phosphorylated glycolipid that anchors the lipopolysaccharide to the outer membrane of the cell. This Marinobacter nauticus (strain ATCC 700491 / DSM 11845 / VT8) (Marinobacter aquaeolei) protein is UDP-2,3-diacylglucosamine hydrolase.